A 58-amino-acid chain; its full sequence is UPF0339 protein Msl4696 (58 aa).

It belongs to the UPF0339 family.

In Mesorhizobium japonicum (strain LMG 29417 / CECT 9101 / MAFF 303099) (Mesorhizobium loti (strain MAFF 303099)), this protein is UPF0339 protein Msl4696.